Reading from the N-terminus, the 172-residue chain is Mesogenin-1 (172 aa).

Positions 1–69 are disordered; the sequence is METLHHPLVK…SPYSSSSHTQ (69 aa). A compositionally biased stretch (polar residues) spans 18–29; that stretch reads SSDSEPNSSCMA. Residues 42–66 show a composition bias toward low complexity; the sequence is SLSQTPSPQSLSPAVSYESPYSSSS. One can recognise a bHLH domain in the interval 108-162; the sequence is QRRRKASEREKLRMRAIAEALHTLRNNLPPMYSQGRQPLTKIQTLKCTINYISEL.

It localises to the nucleus. Involved in specifying the paraxial, but not dorsal, mesoderm. May regulate the expression of T-box transcription factors required for mesoderm formation and differentiation, such as brachyury T, wnt8, vegt and eomes. The chain is Mesogenin-1 (msgn1) from Xenopus tropicalis (Western clawed frog).